The chain runs to 349 residues: Phenylalanine--tRNA ligase alpha subunit (349 aa).

Glu-258 lines the Mg(2+) pocket.

Belongs to the class-II aminoacyl-tRNA synthetase family. Phe-tRNA synthetase alpha subunit type 1 subfamily. Tetramer of two alpha and two beta subunits. Mg(2+) is required as a cofactor.

It localises to the cytoplasm. The enzyme catalyses tRNA(Phe) + L-phenylalanine + ATP = L-phenylalanyl-tRNA(Phe) + AMP + diphosphate + H(+). This chain is Phenylalanine--tRNA ligase alpha subunit, found in Rickettsia africae (strain ESF-5).